Consider the following 196-residue polypeptide: Nucleoside triphosphate pyrophosphatase (196 aa).

D73 (proton acceptor) is an active-site residue.

Belongs to the Maf family. A divalent metal cation serves as cofactor.

It localises to the cytoplasm. The enzyme catalyses a ribonucleoside 5'-triphosphate + H2O = a ribonucleoside 5'-phosphate + diphosphate + H(+). It carries out the reaction a 2'-deoxyribonucleoside 5'-triphosphate + H2O = a 2'-deoxyribonucleoside 5'-phosphate + diphosphate + H(+). Functionally, nucleoside triphosphate pyrophosphatase. May have a dual role in cell division arrest and in preventing the incorporation of modified nucleotides into cellular nucleic acids. The chain is Nucleoside triphosphate pyrophosphatase from Chlamydia pneumoniae (Chlamydophila pneumoniae).